Consider the following 428-residue polypeptide: Elongation factor 1-alpha (428 aa).

Residues 5–215 form the tr-type G domain; that stretch reads KPHVNIVFIG…ALDQIPEPPK (211 aa). Positions 14 to 21 are G1; that stretch reads GHVDHGKS. 14–21 is a binding site for GTP; sequence GHVDHGKS. A Mg(2+)-binding site is contributed by S21. Residues 68 to 72 form a G2 region; sequence GITID. Positions 89–92 are G3; that stretch reads DAPG. Residues 89 to 93 and 144 to 147 contribute to the GTP site; these read DAPGH and NKMD. Residues 144-147 form a G4 region; the sequence is NKMD. Positions 181–183 are G5; the sequence is SAW.

The protein belongs to the TRAFAC class translation factor GTPase superfamily. Classic translation factor GTPase family. EF-Tu/EF-1A subfamily.

The protein resides in the cytoplasm. The enzyme catalyses GTP + H2O = GDP + phosphate + H(+). GTP hydrolase that promotes the GTP-dependent binding of aminoacyl-tRNA to the A-site of ribosomes during protein biosynthesis. The sequence is that of Elongation factor 1-alpha from Thermococcus onnurineus (strain NA1).